The sequence spans 325 residues: Beta-ketoacyl-[acyl-carrier-protein] synthase III (325 aa).

Residues C119 and H252 contribute to the active site. An ACP-binding region spans residues Q253 to R257. N282 is a catalytic residue.

Belongs to the thiolase-like superfamily. FabH family. In terms of assembly, homodimer.

The protein resides in the cytoplasm. It carries out the reaction malonyl-[ACP] + acetyl-CoA + H(+) = 3-oxobutanoyl-[ACP] + CO2 + CoA. Its pathway is lipid metabolism; fatty acid biosynthesis. In terms of biological role, catalyzes the condensation reaction of fatty acid synthesis by the addition to an acyl acceptor of two carbons from malonyl-ACP. Catalyzes the first condensation reaction which initiates fatty acid synthesis and may therefore play a role in governing the total rate of fatty acid production. Possesses both acetoacetyl-ACP synthase and acetyl transacylase activities. Its substrate specificity determines the biosynthesis of branched-chain and/or straight-chain of fatty acids. This Verminephrobacter eiseniae (strain EF01-2) protein is Beta-ketoacyl-[acyl-carrier-protein] synthase III.